Here is a 94-residue protein sequence, read N- to C-terminus: Large ribosomal subunit protein bL25 (94 aa).

Belongs to the bacterial ribosomal protein bL25 family. As to quaternary structure, part of the 50S ribosomal subunit; part of the 5S rRNA/L5/L18/L25 subcomplex. Contacts the 5S rRNA. Binds to the 5S rRNA independently of L5 and L18.

Its function is as follows. This is one of the proteins that binds to the 5S RNA in the ribosome where it forms part of the central protuberance. This is Large ribosomal subunit protein bL25 from Photorhabdus laumondii subsp. laumondii (strain DSM 15139 / CIP 105565 / TT01) (Photorhabdus luminescens subsp. laumondii).